A 491-amino-acid polypeptide reads, in one-letter code: 3-octaprenyl-4-hydroxybenzoate carboxy-lyase (491 aa).

Asparagine 172 contributes to the Mn(2+) binding site. Prenylated FMN-binding positions include 175–177, 189–191, and 194–195; these read IYR, RWL, and RG. Glutamate 238 serves as a coordination point for Mn(2+). Catalysis depends on aspartate 287, which acts as the Proton donor.

This sequence belongs to the UbiD family. Homohexamer. It depends on prenylated FMN as a cofactor. Mn(2+) is required as a cofactor.

The protein resides in the cell membrane. It carries out the reaction a 4-hydroxy-3-(all-trans-polyprenyl)benzoate + H(+) = a 2-(all-trans-polyprenyl)phenol + CO2. It functions in the pathway cofactor biosynthesis; ubiquinone biosynthesis. Catalyzes the decarboxylation of 3-octaprenyl-4-hydroxy benzoate to 2-octaprenylphenol, an intermediate step in ubiquinone biosynthesis. The chain is 3-octaprenyl-4-hydroxybenzoate carboxy-lyase from Histophilus somni (strain 2336) (Haemophilus somnus).